The sequence spans 280 residues: MVSRRKKRKAGGHEESIPSPPGYSAVPVKFSAKQQAPHYLYMRQHRVRQGTQSTWPPDRTLFILNVPPYCTQESLSRCLSCCGTIKTVELQEKPDLAESPTEPKSQFFHPKPVPGFQVAYVVFQKPSGVSAALNLKGPLLVSTESHLVKSGIHKWISDYEDSVLDPEALRMEVDAFMEAYDKKIAEEEAKAKEEEGVPDEEGWVKVTRRGRRPVLPRTEAASLRVLEKEKRKRARKELLNFYAWQHRETKMEHLAQLRKKFEEDKQRIELMRAQRKFRPY.

Basic residues predominate over residues 1 to 10 (MVSRRKKRKA). The disordered stretch occupies residues 1 to 24 (MVSRRKKRKAGGHEESIPSPPGYS). The RRM domain occupies 59–159 (RTLFILNVPP…SGIHKWISDY (101 aa)). Residue serine 99 is modified to Phosphoserine.

Belongs to the RRP7 family. As to quaternary structure, part of the small subunit (SSU) processome, composed of more than 70 proteins and the RNA chaperone small nucleolar RNA (snoRNA) U3. Interacts with NOL6; required for NOL6 localization to nucleolus.

Its subcellular location is the nucleus. It is found in the nucleolus. It localises to the cell projection. The protein localises to the cilium. The protein resides in the cytoplasm. Its subcellular location is the cytoskeleton. It is found in the microtubule organizing center. It localises to the centrosome. Functionally, nucleolar protein that is involved in ribosomal RNA (rRNA) processing. Also plays a role in primary cilia resorption, and cell cycle progression in neurogenesis and neocortex development. Part of the small subunit (SSU) processome, first precursor of the small eukaryotic ribosomal subunit. During the assembly of the SSU processome in the nucleolus, many ribosome biogenesis factors, an RNA chaperone and ribosomal proteins associate with the nascent pre-rRNA and work in concert to generate RNA folding, modifications, rearrangements and cleavage as well as targeted degradation of pre-ribosomal RNA by the RNA exosome. The chain is Ribosomal RNA-processing protein 7 homolog A (Rrp7a) from Mus musculus (Mouse).